Reading from the N-terminus, the 201-residue chain is UPF0301 protein MSMEG_6921/MSMEI_6732 (201 aa).

It belongs to the UPF0301 (AlgH) family.

The protein is UPF0301 protein MSMEG_6921/MSMEI_6732 of Mycolicibacterium smegmatis (strain ATCC 700084 / mc(2)155) (Mycobacterium smegmatis).